The following is a 257-amino-acid chain: Receptor expression-enhancing protein 4 (257 aa).

2 consecutive transmembrane segments (helical) span residues 1 to 21 (MVSW…CPAY) and 42 to 62 (WIVF…ISWF). Ser152 and Ser194 each carry phosphoserine. The segment at 183–257 (PIGYRAGGLQ…KKTVPSDVDS (75 aa)) is disordered. Thr196 is subject to Phosphothreonine. Ser202 is modified (phosphoserine). Phosphothreonine is present on Thr250. Residue Ser253 is modified to Phosphoserine.

It belongs to the DP1 family. In terms of tissue distribution, expressed in circumvallate papillae and testis.

The protein localises to the endoplasmic reticulum membrane. Functionally, microtubule-binding protein required to ensure proper cell division and nuclear envelope reassembly by sequestering the endoplasmic reticulum away from chromosomes during mitosis. Probably acts by clearing the endoplasmic reticulum membrane from metaphase chromosomes. In Homo sapiens (Human), this protein is Receptor expression-enhancing protein 4 (REEP4).